A 411-amino-acid polypeptide reads, in one-letter code: MNALAATNRNFKLAARLLGLDSKLEKSLLIPFREIKVECTIPKDDGTLASFVGFRVQHDNARGPMKGGIRYHPEVDPDEVNALAQLMTWKTAVAKIPYGGAKGGIGCDPSKLSISELERLTRVFTQKIHDLIGIHTDVPAPDMGTGPQTMAWILDEYSKFHGYSPAVVTGKPIDLGGSLGRDAATGRGVMFGTEALLNEHGKTISGQRFVIQGFGNVGSWAAKLISEKGGKIVAVSDITGAIKNKDGIDIPALLKHTKEHRGVKGFDGADPIDPNSILVEDCDILVPAALGGVINRENANEIKAKFIIEAANHPTDPDADEILSKKGVVILPDIYANSGGVTVSYFEWVQNIQGFMWEEEKVNDELKTYMTRSFKDLKEMCKTHSCDLRMGAFTLGVNRVAQATILRGWGA.

Lys102 is a catalytic residue.

The protein belongs to the Glu/Leu/Phe/Val dehydrogenases family.

The enzyme catalyses L-glutamate + NAD(+) + H2O = 2-oxoglutarate + NH4(+) + NADH + H(+). It catalyses the reaction L-glutamate + NADP(+) + H2O = 2-oxoglutarate + NH4(+) + NADPH + H(+). This is Glutamate dehydrogenase 1 (GDH1) from Arabidopsis thaliana (Mouse-ear cress).